The primary structure comprises 125 residues: Cystatin-like cysteine protease inhibitor EPIC2B (125 aa).

The N-terminal stretch at 1–21 is a signal peptide; that stretch reads MSFLRPTLALLAVTALVTTSA. The N-linked (GlcNAc...) asparagine glycan is linked to Asn45. Positions 68–72 match the Secondary area of contact motif; it reads QVVSG.

It belongs to the cystatin family. In terms of assembly, interacts with the host papain-like cysteine protease PIP1. Interacts with the host papain-like cysteine protease RCR3. Interacts with the host papain-like cysteine protease C14.

The protein resides in the secreted. Its function is as follows. Secreted effector that interacts with and inhibits the pathogenesis-related papain-like cysteine proteases C14, PIP1 and RCR3 of host plants. Inhibition of host proteases by a pathogen extracellular protease inhibitor forms a specific type of defense-counterdefense mechanism between plants and microbial pathogens. This Phytophthora infestans (strain T30-4) (Potato late blight agent) protein is Cystatin-like cysteine protease inhibitor EPIC2B.